Here is a 77-residue protein sequence, read N- to C-terminus: Conotoxin Cl6.15 (77 aa).

The first 19 residues, 1-19 (MKLSVKFLLFLMILPLIAG), serve as a signal peptide directing secretion. Positions 20–37 (EDMSDNDAPKSVDVQRNV) are excised as a propeptide. Cystine bridges form between cysteine 49/cysteine 61, cysteine 55/cysteine 66, and cysteine 60/cysteine 75.

This sequence belongs to the conotoxin I1 superfamily. Expressed by the venom duct.

It localises to the secreted. In Californiconus californicus (California cone), this protein is Conotoxin Cl6.15.